The following is a 46-amino-acid chain: Diuretic hormone (46 aa).

Ile46 carries the isoleucine amide modification.

The protein belongs to the sauvagine/corticotropin-releasing factor/urotensin I family.

It is found in the secreted. Regulation of fluid secretion. Stimulates primary urine secretion by Malpighian tubules and causes a dose-dependent stimulation of cAMP levels in the tubules. In Locusta migratoria (Migratory locust), this protein is Diuretic hormone.